A 240-amino-acid polypeptide reads, in one-letter code: Dihydromonapterin reductase (240 aa).

The active-site Proton acceptor is Tyr-152.

It belongs to the short-chain dehydrogenases/reductases (SDR) family. FolM subfamily.

It carries out the reaction (6S)-5,6,7,8-tetrahydrofolate + NADP(+) = 7,8-dihydrofolate + NADPH + H(+). It catalyses the reaction 7,8-dihydromonapterin + NADPH + H(+) = 5,6,7,8-tetrahydromonapterin + NADP(+). In terms of biological role, catalyzes the reduction of dihydromonapterin to tetrahydromonapterin. Also has lower activity with dihydrofolate. This chain is Dihydromonapterin reductase (folM), found in Escherichia coli O6:H1 (strain CFT073 / ATCC 700928 / UPEC).